The sequence spans 1475 residues: Mediator of RNA polymerase II transcription subunit 1 (1475 aa).

Residues 1–10 show a composition bias toward polar residues; it reads MSGSNAKSSG. 7 disordered regions span residues 1–26, 616–644, 709–992, 1135–1166, 1184–1245, 1263–1354, and 1387–1475; these read MSGS…KNKQ, ETDP…KTSD, GVTA…VASG, QPQP…AGAS, NKTG…SKKA, KANS…RFDH, and PKLS…LAGE. Low complexity-rich tracts occupy residues 621–641, 711–729, and 738–782; these read SGSS…GSAK, TASS…ITGK, and KSTA…SGSS. Phosphoserine is present on residues S830, S834, S854, and S858. Polar residues-rich tracts occupy residues 860–874 and 888–897; these read VYSS…NSPK and GKPSMSTLKS. Residues 919–934 are compositionally biased toward low complexity; it reads TSSGPSASSGSSGATG. The segment covering 944 to 953 has biased composition (pro residues); that stretch reads APPPPPPIPP. Composition is skewed to low complexity over residues 954–966, 973–989, 1143–1159, 1185–1225, and 1265–1276; these read LASS…SSQS, SSAS…TAGV, TSSC…SAGS, KTGS…TGST, and NSSGNLSSKLSG. Residues 1286-1296 are compositionally biased toward polar residues; that stretch reads TKSNSTNSFQE. Low complexity-rich tracts occupy residues 1334 to 1346 and 1399 to 1409; these read SGSV…GSMS and TSGRSTPSGSS. 2 stretches are compositionally biased toward polar residues: residues 1415–1430 and 1442–1458; these read GTSS…STGL and SQSG…TAGT.

This sequence belongs to the Mediator complex subunit 1 family. As to quaternary structure, component of the Mediator complex.

It localises to the nucleus. In terms of biological role, component of the Mediator complex, a coactivator involved in the regulated transcription of nearly all RNA polymerase II-dependent genes. Mediator functions as a bridge to convey information from gene-specific regulatory proteins to the basal RNA polymerase II transcription machinery. Mediator is recruited to promoters by direct interactions with regulatory proteins and serves as a scaffold for the assembly of a functional preinitiation complex with RNA polymerase II and the general transcription factors. Required for activated transcription of the MtnA, MtnB and MtnD genes. This is Mediator of RNA polymerase II transcription subunit 1 (MED1) from Drosophila melanogaster (Fruit fly).